The following is a 384-amino-acid chain: Substance-K receptor (384 aa).

Residues 1-32 are Extracellular-facing; that stretch reads MGACVVMTDINISSGLDSNATGITAFSMPGWQ. Residues asparagine 11 and asparagine 19 are each glycosylated (N-linked (GlcNAc...) asparagine). The helical transmembrane segment at 33–56 threads the bilayer; sequence LALWTAAYLALVLVAVMGNATVIW. The Cytoplasmic portion of the chain corresponds to 57–69; the sequence is IILAHQRMRTVTN. The chain crosses the membrane as a helical span at residues 70 to 90; the sequence is YFIVNLALADLCMAAFNAAFN. Topologically, residues 91-107 are extracellular; that stretch reads FVYASHNIWYFGRAFCY. The cysteines at positions 106 and 181 are disulfide-linked. The chain crosses the membrane as a helical span at residues 108–129; it reads FQNLFPITAMFVSIYSMTAIAA. Residues 130–149 lie on the Cytoplasmic side of the membrane; it reads DRYMAIVHPFQPRLSAPGTR. A helical membrane pass occupies residues 150–170; the sequence is AVIAGIWLVALALAFPQCFYS. Residues 171–196 are Extracellular-facing; it reads TITTDEGATKCVVAWPEDSGGKMLLL. Residues 197-218 form a helical membrane-spanning segment; the sequence is YHLIVIALIYFLPLVVMFVAYS. Over 219–251 the chain is Cytoplasmic; that stretch reads VIGLTLWRRSVPGHQAHGANLRHLQAKKKFVKT. Residues 252 to 272 form a helical membrane-spanning segment; that stretch reads MVLVVVTFAICWLPYHLYFIL. Residues 273–290 are Extracellular-facing; the sequence is GTFQEDIYCHKFIQQVYL. The chain crosses the membrane as a helical span at residues 291–310; the sequence is ALFWLAMSSTMYNPIIYCCL. At 311–384 the chain is on the cytoplasmic side; sequence NHRFRSGFRL…SPQAGVSTEP (74 aa). The S-palmitoyl cysteine moiety is linked to residue cysteine 324.

This sequence belongs to the G-protein coupled receptor 1 family.

The protein localises to the cell membrane. Functionally, this is a receptor for the tachykinin neuropeptide substance K (neurokinin A). It is associated with G proteins that activate a phosphatidylinositol-calcium second messenger system. The rank order of affinity of this receptor to tachykinins is: substance K &gt; neuromedin-K &gt; substance P. This Bos taurus (Bovine) protein is Substance-K receptor (TACR2).